The sequence spans 109 residues: MFGKGGMGNLMKQAQQMQDRMQKLQEEIANMEVTGESGAGLVKVTITGSHSVRRVEIDESLMEDDKEMLEDLIAAAFNDAARRVEETQKEKMASVTGGMQLPPGMKMPF.

Disordered stretches follow at residues 1–21 and 88–109; these read MFGKGGMGNLMKQAQQMQDRM and QKEKMASVTGGMQLPPGMKMPF.

The protein belongs to the YbaB/EbfC family. Homodimer.

The protein resides in the cytoplasm. It localises to the nucleoid. Binds to DNA and alters its conformation. May be involved in regulation of gene expression, nucleoid organization and DNA protection. The chain is Nucleoid-associated protein VIBHAR_03086 from Vibrio campbellii (strain ATCC BAA-1116).